Reading from the N-terminus, the 195-residue chain is Peptide deformylase (195 aa).

The Fe cation site is built by Cys102 and His144. The active site involves Glu145. Residue His148 participates in Fe cation binding.

Belongs to the polypeptide deformylase family. It depends on Fe(2+) as a cofactor.

It catalyses the reaction N-terminal N-formyl-L-methionyl-[peptide] + H2O = N-terminal L-methionyl-[peptide] + formate. In terms of biological role, removes the formyl group from the N-terminal Met of newly synthesized proteins. Requires at least a dipeptide for an efficient rate of reaction. N-terminal L-methionine is a prerequisite for activity but the enzyme has broad specificity at other positions. This chain is Peptide deformylase, found in Salinibacter ruber (strain DSM 13855 / M31).